The following is a 166-amino-acid chain: Ribosome biogenesis regulatory protein homolog (166 aa).

A phosphoserine mark is found at S34 and S64. The tract at residues 144–166 is disordered; that stretch reads KEKKLTSKQVRNTSKKIKRSRRH. Residues 156–166 are compositionally biased toward basic residues; sequence TSKKIKRSRRH.

This sequence belongs to the RRS1 family. In terms of assembly, component of a hexameric 5S RNP precursor complex, composed of 5S RNA, rrs1, rpf2, rpl5a/rpl5b, rpl11a/rpl11b and syo1; this complex acts as a precursor for ribosome assembly. Interacts with sad1.

The protein localises to the nucleus. It is found in the nucleolus. Functionally, involved in ribosomal large subunit assembly. The sequence is that of Ribosome biogenesis regulatory protein homolog from Schizosaccharomyces pombe (strain 972 / ATCC 24843) (Fission yeast).